Reading from the N-terminus, the 88-residue chain is MANTTSAKKATRKIARRTAINRSRRTLMRGTVRIVEEAIAKGDRDAAIQAMKRAEPELMRAGQQNIIHKNNASRKVSRLTHRIAKLAQ.

Belongs to the bacterial ribosomal protein bS20 family.

Binds directly to 16S ribosomal RNA. The polypeptide is Small ribosomal subunit protein bS20 (Nitrobacter winogradskyi (strain ATCC 25391 / DSM 10237 / CIP 104748 / NCIMB 11846 / Nb-255)).